A 180-amino-acid chain; its full sequence is Large ribosomal subunit protein uL5 (180 aa).

The protein belongs to the universal ribosomal protein uL5 family. As to quaternary structure, part of the 50S ribosomal subunit; part of the 5S rRNA/L5/L18/L25 subcomplex. Contacts the 5S rRNA and the P site tRNA. Forms a bridge to the 30S subunit in the 70S ribosome.

This is one of the proteins that bind and probably mediate the attachment of the 5S RNA into the large ribosomal subunit, where it forms part of the central protuberance. In the 70S ribosome it contacts protein S13 of the 30S subunit (bridge B1b), connecting the 2 subunits; this bridge is implicated in subunit movement. Contacts the P site tRNA; the 5S rRNA and some of its associated proteins might help stabilize positioning of ribosome-bound tRNAs. In Streptococcus equi subsp. equi (strain 4047), this protein is Large ribosomal subunit protein uL5.